We begin with the raw amino-acid sequence, 582 residues long: Ubiquilin-1 (582 aa).

2 disordered regions span residues 1-26 (MAES…AEPK) and 102-136 (RPQD…AANS). An N-acetylalanine modification is found at Ala-2. Residues 28-102 (MKVTVKTPKE…VHLVIKTQNR (75 aa)) form the Ubiquitin-like domain. Positions 102–135 (RPQDNSAQQTNTTGNSVTSSPAPDSNPTSGPAAN) are enriched in polar residues. An interaction with UBXN4 region spans residues 169-422 (QLLSNPEMMV…LNNPLFAGNP (254 aa)). STI1 domains follow at residues 173 to 201 (NPEM…QLIM) and 203 to 242 (NPQM…MQEM). Residues 285 to 365 (NPFASLVSSP…NLVPGAGASM (81 aa)) form a disordered region. Polar residues predominate over residues 290-304 (LVSSPSSAEGTQPSR). Residues 318-346 (QTPQSSPASGSTGSTTNTVSTSAGNATST) are compositionally biased toward low complexity. 2 STI1 domains span residues 381–428 (NPQL…QEQM) and 432–464 (LPTF…QQGL). The segment at 481-513 (GLAAGNSGGPAGTTAPSTAPGEDTNPQGGAAEP) is disordered. Residues 539 to 579 (RFQQQLEQLSAMGFLNREANLQALIATGGDINAAIERLLGS) form the UBA domain.

Monomer and homodimer. Heterodimer with UBQLN2. Binds CD47. Binds NBL1. Binds GABRA1, GABRA2, GABRA3, GABRA6, GABRB1, GABRB2 and GABRB3. Binds UBE3A, BTRC, P4HB and MTOR. Interacts with the proteasome 19S subunit. Interacts (via ubiquitin-like domain) with TREX1; the interaction is direct and may control TREX1 subcellular location. Forms a complex with UBXN4 and VCP. Interacts (via UBA domain) with UBQLN4 (via ubiquitin-like domain). Found in a complex with UBQLN2 and MAP1LC3A/B/C. The monomeric form interacts with PSEN1 and PSEN2. Interacts with ORAI1. Interacts (via UBA domain) with TICAM1. Interacts with EPS15. Interacts (via UBA domain) with UBA52 and (via ubiquitin-like domain) with PSMD3 and PSMD4. Interacts with HERPUD1. Interacts with MAP1LC3A/B/C in the presence of UBQLN4. Interacts (via ubiquitin-like domain) with EPS15 (via UIM domains) and both the ubiquitinated and non-ubiquitinated forms can interact with EPS15. Interacts (via ubiquitin-like domain) with EPS15L1, HGS (via UIM domain) and STAM2 (via UIM domain). Interacts with BCL2L10/BCL-B; in the cytoplasm. Degraded during both macroautophagy and during chaperone-mediated autophagy (CMA). In terms of processing, phosphorylated. Post-translationally, ubiquitinated.

The protein resides in the nucleus. It localises to the cytoplasm. It is found in the endoplasmic reticulum. The protein localises to the cytoplasmic vesicle. Its subcellular location is the autophagosome. The protein resides in the cell membrane. In terms of biological role, plays an important role in the regulation of different protein degradation mechanisms and pathways including ubiquitin-proteasome system (UPS), autophagy and endoplasmic reticulum-associated protein degradation (ERAD) pathway. Mediates the proteasomal targeting of misfolded or accumulated proteins for degradation by binding (via UBA domain) to their polyubiquitin chains and by interacting (via ubiquitin-like domain) with the subunits of the proteasome. Plays a role in the ERAD pathway via its interaction with ER-localized proteins UBXN4, VCP and HERPUD1 and may form a link between the polyubiquitinated ERAD substrates and the proteasome. Plays a role in unfolded protein response (UPR) by attenuating the induction of UPR-inducible genes, DDTI3/CHOP, HSPA5 and PDIA2 during ER stress. Involved in the regulation of macroautophagy and autophagosome formation; required for maturation of autophagy-related protein LC3 from the cytosolic form LC3-I to the membrane-bound form LC3-II and may assist in the maturation of autophagosomes to autolysosomes by mediating autophagosome-lysosome fusion. Negatively regulates the TICAM1/TRIF-dependent toll-like receptor signaling pathway by decreasing the abundance of TICAM1 via the autophagic pathway. Promotes the ubiquitination and lysosomal degradation of ORAI1, consequently down-regulating the ORAI1-mediated Ca2+ mobilization. Suppresses the maturation and proteasomal degradation of amyloid beta A4 protein (A4) by stimulating the lysine 63 (K63)-linked polyubiquitination. Delays the maturation of A4 by sequestering it in the Golgi apparatus and preventing its transport to the cell surface for subsequent processing. Promotes the surface expression of GABA-A receptors. Ubiquitinates BCL2L10 and thereby stabilizes protein abundance. This is Ubiquilin-1 (Ubqln1) from Rattus norvegicus (Rat).